A 172-amino-acid polypeptide reads, in one-letter code: Cystatin-like cysteine protease inhibitor EPIC4 (172 aa).

The signal sequence occupies residues Met1–Ala17. Residues Gln71–Gly75 carry the Secondary area of contact motif. Positions Glu129 to Val172 are disordered. Residues Ala130–Thr156 show a composition bias toward low complexity. A compositionally biased stretch (polar residues) spans Met157–Ala166.

The protein belongs to the cystatin family.

The protein resides in the secreted. Secreted effector that interacts with and inhibits host apoplastic pathogenesis-related papain-like cysteine proteases. Inhibition of host proteases by a pathogen extracellular protease inhibitor forms a specific type of defense-counterdefense mechanism between plants and microbial pathogens. In Phytophthora infestans (Potato late blight agent), this protein is Cystatin-like cysteine protease inhibitor EPIC4.